The primary structure comprises 245 residues: Transmembrane and ubiquitin-like domain-containing protein 1 (245 aa).

The interval 2–30 is required to release iHOPS from membranes; the sequence is ALIEGVGDEVTVLFAVLACLLVLALAWVS. Residues 11-31 form a helical membrane-spanning segment; sequence VTVLFAVLACLLVLALAWVST. A disordered region spans residues 33-100; sequence TTESTDPQPQ…ASTPPDSPQE (68 aa). Residues S73, S97, and S126 each carry the phosphoserine modification. The 74-residue stretch at 102 to 175 folds into the Ubiquitin-like domain; that stretch reads LLLRLKFLND…LHCHVSTRVG (74 aa). The next 2 membrane-spanning stretches (helical) occupy residues 194-214 and 219-239; these read IGSL…YCQI and FFPL…SLLA.

In terms of assembly, interacts with EEF1A1, CAMLG, GRIA2 and GRIP1. Interacts with NPM1 and CDKN2A; TMUB1 can enhance interaction between NPM1 and CDKN2A and is proposed to bridge the proteins; proposed to be mediated by iHOPS. Interacts with TUBG1. Interacts with ERLIN2 and AMFR; TMUB1 promotes the interaction of ERLIN2 with AMFR. Isoform 1 (lHOPS) is processed by regulated intramembrane proteolysis (RIP) in the N-terminus to release iHOPS from membranes. In terms of processing, isoform 2 seems to undergo a selective cleavage in the C-terminal region to release an additional cytoplasmic form. As to expression, expressed in adult brain; at protein level. Isoform 1 (lHOPS) is highly expressed in small intestine, stomach and epididymis. Isoform 2 (sHOPS) and iHOPS are abundantly expressed in brain, liver and adrenal gland.

Its subcellular location is the membrane. It is found in the postsynaptic cell membrane. It localises to the recycling endosome. The protein resides in the cytoplasm. The protein localises to the nucleus. Its subcellular location is the nucleolus. It is found in the cytoskeleton. It localises to the microtubule organizing center. The protein resides in the centrosome. Involved in sterol-regulated ubiquitination and degradation of HMG-CoA reductase HMGCR. Involved in positive regulation of AMPA-selective glutamate receptor GRIA2 recycling to the cell surface. Acts as a negative regulator of hepatocyte growth during regeneration. In terms of biological role, may contribute to the regulation of translation during cell-cycle progression. May contribute to the regulation of cell proliferation. May be involved in centrosome assembly. Modulates stabilization and nucleolar localization of tumor suppressor CDKN2A and enhances association between CDKN2A and NPM1. The chain is Transmembrane and ubiquitin-like domain-containing protein 1 (Tmub1) from Mus musculus (Mouse).